The primary structure comprises 461 residues: Elongation factor 1-alpha, oocyte form (461 aa).

At Gly-2 the chain carries N,N,N-trimethylglycine. The region spanning 5-242 is the tr-type G domain; the sequence is KIHINIVVIG…DCIIPPQRPT (238 aa). A G1 region spans residues 14–21; it reads GHVDSGKS. 14-21 serves as a coordination point for GTP; that stretch reads GHVDSGKS. A G2 region spans residues 70-74; sequence GITID. The G3 stretch occupies residues 91-94; that stretch reads DAPG. Residues 91–95 and 153–156 contribute to the GTP site; these read DAPGH and NKMD. Positions 153-156 are G4; it reads NKMD. The G5 stretch occupies residues 194–196; it reads SGW. 5-glutamyl glycerylphosphorylethanolamine is present on residues Glu-301 and Glu-374.

The protein belongs to the TRAFAC class translation factor GTPase superfamily. Classic translation factor GTPase family. EF-Tu/EF-1A subfamily. Oocyte.

Its subcellular location is the cytoplasm. Functionally, this protein promotes the GTP-dependent binding of aminoacyl-tRNA to the A-site of ribosomes during protein biosynthesis. The sequence is that of Elongation factor 1-alpha, oocyte form (eef1ao) from Xenopus laevis (African clawed frog).